The primary structure comprises 185 residues: Ribosome-recycling factor (185 aa).

The disordered stretch occupies residues 137–162 (DSIDKMVKDGEVGEDEGRRAEKELDD).

It belongs to the RRF family.

Its subcellular location is the cytoplasm. Its function is as follows. Responsible for the release of ribosomes from messenger RNA at the termination of protein biosynthesis. May increase the efficiency of translation by recycling ribosomes from one round of translation to another. In Streptomyces coelicolor (strain ATCC BAA-471 / A3(2) / M145), this protein is Ribosome-recycling factor.